Here is a 980-residue protein sequence, read N- to C-terminus: Putative helicase 087L (980 aa).

The Helicase ATP-binding domain maps to 59-246 (INPHTLYDGV…IDLFNLILRT (188 aa)). Residue 72 to 79 (HEMGTGKT) coordinates ATP. The short motif at 189-192 (DEAH) is the DEAH box element. The region spanning 389–546 (RLSFVFSEFV…SIDLHMYEIA (158 aa)) is the Helicase C-terminal domain.

This sequence belongs to the IIV-6 022L family. SNF2/RAD54 helicase subfamily.

The protein is Putative helicase 087L of Invertebrate iridescent virus 3 (IIV-3).